The following is a 236-amino-acid chain: Urease accessory protein UreG (236 aa).

The tract at residues 1-26 (MHDHSLHSGHDHGLGPGSFHDRGAPH) is disordered. Position 42 to 49 (42 to 49 (GPVGSGKT)) interacts with GTP.

It belongs to the SIMIBI class G3E GTPase family. UreG subfamily. Homodimer. UreD, UreF and UreG form a complex that acts as a GTP-hydrolysis-dependent molecular chaperone, activating the urease apoprotein by helping to assemble the nickel containing metallocenter of UreC. The UreE protein probably delivers the nickel.

The protein resides in the cytoplasm. Facilitates the functional incorporation of the urease nickel metallocenter. This process requires GTP hydrolysis, probably effectuated by UreG. This Anaeromyxobacter sp. (strain Fw109-5) protein is Urease accessory protein UreG.